Consider the following 435-residue polypeptide: ATP-dependent protease ATPase subunit HslU (435 aa).

ATP-binding positions include Val18, 60–65, Asp248, Glu313, and Arg385; that span reads GVGKTE.

This sequence belongs to the ClpX chaperone family. HslU subfamily. In terms of assembly, a double ring-shaped homohexamer of HslV is capped on each side by a ring-shaped HslU homohexamer. The assembly of the HslU/HslV complex is dependent on binding of ATP.

It localises to the cytoplasm. Its function is as follows. ATPase subunit of a proteasome-like degradation complex; this subunit has chaperone activity. The binding of ATP and its subsequent hydrolysis by HslU are essential for unfolding of protein substrates subsequently hydrolyzed by HslV. HslU recognizes the N-terminal part of its protein substrates and unfolds these before they are guided to HslV for hydrolysis. In Parvibaculum lavamentivorans (strain DS-1 / DSM 13023 / NCIMB 13966), this protein is ATP-dependent protease ATPase subunit HslU.